Reading from the N-terminus, the 198-residue chain is Prolactin (198 aa).

3 disulfides stabilise this stretch: C4–C11, C58–C173, and C190–C198.

The protein belongs to the somatotropin/prolactin family. As to expression, pituitary gland.

Its subcellular location is the secreted. The chain is Prolactin from Chelonia mydas (Green sea-turtle).